Reading from the N-terminus, the 265-residue chain is MAVESAAVGVFDSGVGGLSVLREIRARLPSESLLYVADNAHVPYGEKSAEYIRERCERIGDFLLEQGAKALVLACNTATAAAAAELRERYPQVPLVAMEPAVKPAAAATRNGRVGVLATTGTLKSARFAALLDRFASDVQVFTQPCPGLVERIEAGDLYGPQTRALLERLLAPILEQGCDTLILGCTHYPFVKPLLAELIPAEMAVIDTGAAVARQLERVLSARALLASGQAATPRFWTSALPEEMERILPILWGSPESVGKLVV.

Substrate contacts are provided by residues 12 to 13 and 44 to 45; these read DS and YG. The Proton donor/acceptor role is filled by Cys75. A substrate-binding site is contributed by 76–77; sequence NT. Cys186 serves as the catalytic Proton donor/acceptor. 187–188 lines the substrate pocket; sequence TH.

Belongs to the aspartate/glutamate racemases family.

The enzyme catalyses L-glutamate = D-glutamate. It participates in cell wall biogenesis; peptidoglycan biosynthesis. Its function is as follows. Provides the (R)-glutamate required for cell wall biosynthesis. The protein is Glutamate racemase of Pseudomonas aeruginosa (strain ATCC 15692 / DSM 22644 / CIP 104116 / JCM 14847 / LMG 12228 / 1C / PRS 101 / PAO1).